Consider the following 457-residue polypeptide: MRNKVRKIHMIGIGGSGMSGIAEVLLNLGYEVSGSDLSMSQTVRRLGSLGASIAIGHGRENLGDADVVVKSTAVTSDNPEVVVARERGIPVIPRAEMLAELMRLRTGIAVAGTHGKTTTTSLLATIFTEAGYDPTVIIGGRLNAYGAGARLGQGEYLIAEADESDGSFLCLSPIASVVTNVDADHLDHYDGIEAIDDAFVDFLNNIPFYGVNVVCLDDPGVARILPRVNRPILTYGFSDKARLRGRIIDSGAMSCFEVSLDGKRLGEMRLNHPGRHNVLNALGAIGVSLEVGIPLGTIAEALAKFAGVGRRFERKGEKDGVVVVDDYGHHPAEIKATLATARAVYPERRLVVAFQPHRFSRTKALFGDFCTCFEAADELLLTEIYPASEAPIPGVSGESLGQGIRQVTKTKVAYYPDFAAMEAALPGILRPGDLFVTLGAGSIWQVGAHYLESERGA.

An ATP-binding site is contributed by 112–118 (GTHGKTT).

Belongs to the MurCDEF family.

The protein localises to the cytoplasm. It catalyses the reaction UDP-N-acetyl-alpha-D-muramate + L-alanine + ATP = UDP-N-acetyl-alpha-D-muramoyl-L-alanine + ADP + phosphate + H(+). The protein operates within cell wall biogenesis; peptidoglycan biosynthesis. Its function is as follows. Cell wall formation. This Solidesulfovibrio magneticus (strain ATCC 700980 / DSM 13731 / RS-1) (Desulfovibrio magneticus) protein is UDP-N-acetylmuramate--L-alanine ligase.